A 120-amino-acid polypeptide reads, in one-letter code: Small ribosomal subunit protein bS16 (120 aa).

Residues 81–120 are disordered; sequence GLAKRPTRNNPQKAEPGEKAKERAAKRAEKAAAPAEDAAA. Basic and acidic residues predominate over residues 95-110; the sequence is EPGEKAKERAAKRAEK. Positions 111–120 are enriched in low complexity; that stretch reads AAAPAEDAAA.

Belongs to the bacterial ribosomal protein bS16 family.

This chain is Small ribosomal subunit protein bS16, found in Methylorubrum extorquens (strain CM4 / NCIMB 13688) (Methylobacterium extorquens).